A 437-amino-acid chain; its full sequence is Na(+)/H(+) antiporter NhaA (437 aa).

The next 11 membrane-spanning stretches (helical) occupy residues Ser12–Ala32, Leu65–Leu85, Ala103–Val123, Gly133–Gly153, Ile162–Phe182, His186–Gly206, Ile214–Ser234, Gly308–Ser328, Val333–Ile353, Ile377–Leu397, and Leu412–Val432.

Belongs to the NhaA Na(+)/H(+) (TC 2.A.33) antiporter family.

The protein resides in the cell inner membrane. The enzyme catalyses Na(+)(in) + 2 H(+)(out) = Na(+)(out) + 2 H(+)(in). In terms of biological role, na(+)/H(+) antiporter that extrudes sodium in exchange for external protons. In Bacteroides fragilis (strain ATCC 25285 / DSM 2151 / CCUG 4856 / JCM 11019 / LMG 10263 / NCTC 9343 / Onslow / VPI 2553 / EN-2), this protein is Na(+)/H(+) antiporter NhaA.